The primary structure comprises 84 residues: Small ribosomal subunit protein uS17 (84 aa).

Belongs to the universal ribosomal protein uS17 family. Part of the 30S ribosomal subunit.

One of the primary rRNA binding proteins, it binds specifically to the 5'-end of 16S ribosomal RNA. The polypeptide is Small ribosomal subunit protein uS17 (Karelsulcia muelleri (strain GWSS) (Sulcia muelleri)).